We begin with the raw amino-acid sequence, 71 residues long: Light-harvesting protein B-800/850 alpha chain (71 aa).

Residues Met1–Gly15 are Cytoplasmic-facing. Residues Val16–Ala36 traverse the membrane as a helical segment. His31 is an a bacteriochlorophyll binding site. The Periplasmic segment spans residues Lys37–Lys50. Residues Ala51–Gln71 form a helical membrane-spanning segment.

It belongs to the antenna complex alpha subunit family. In terms of assembly, an alpha/beta heterodimer conjugated to 3 bacteriochlorophyll molecules. The core complex is formed by different alpha and beta chains, binding bacteriochlorophyll molecules, and arranged most probably in tetrameric structures disposed around the reaction center. The non-pigmented gamma chains may constitute additional components.

Its subcellular location is the cell membrane. Antenna complexes are light-harvesting systems, which transfer the excitation energy to the reaction centers. In Rubrivivax gelatinosus (Rhodocyclus gelatinosus), this protein is Light-harvesting protein B-800/850 alpha chain (pucA).